We begin with the raw amino-acid sequence, 436 residues long: Antilisterial bacteriocin subtilosin biosynthesis protein AlbD (436 aa).

10 consecutive transmembrane segments (helical) span residues 27–47 (IAAG…QAGI), 51–71 (VLGK…MVFL), 112–132 (TLFF…SGAQ), 134–154 (LFWL…GVML), 166–186 (FLLH…MPAV), 187–207 (TIPL…PVFL), 240–260 (AMLL…FQMM), 270–290 (IYIV…LYSI), 315–335 (FYSG…GFIS), and 395–415 (ATLA…LIIV).

It is found in the cell membrane. Functionally, involved in the production of the bacteriocin subtilosin. Required for immunity to subtilosin. In Bacillus subtilis, this protein is Antilisterial bacteriocin subtilosin biosynthesis protein AlbD (albD).